The following is a 921-amino-acid chain: Glutamate receptor 3.7 (921 aa).

The first 25 residues, 1-25 (MGLGIDPSVAITALIVVILVVPMDC), serve as a signal peptide directing secretion. The Extracellular portion of the chain corresponds to 26-580 (QRPQLVNIGA…WIFLRPFTSR (555 aa)). Residues asparagine 214, asparagine 300, asparagine 330, asparagine 369, asparagine 396, asparagine 478, and asparagine 568 are each glycosylated (N-linked (GlcNAc...) asparagine). Residues 581 to 601 (LWCVVLVSFLVIAVVIWILEH) traverse the membrane as a helical segment. The Cytoplasmic segment spans residues 602–608 (RINEDFR). Residues 609–629 (GPPRRQLSTMLLFSFSTLFKR) traverse the membrane as a helical segment. The Cytoplasmic portion of the chain corresponds to 630–640 (NQEDTISNLAR). A helical transmembrane segment spans residues 641 to 661 (LVMIVWLFLLMVLTASYTANL). Topologically, residues 662 to 822 (TSILTVQQLP…PEPNQLHLKS (161 aa)) are extracellular. A helical membrane pass occupies residues 823–843 (FKGLYLVCIAITVSAFLVFVL). The Cytoplasmic segment spans residues 844 to 921 (RMIRQFVRYR…VQADTEVPRN (78 aa)). The segment at 896–921 (FRRSDDSNNNPSHVGEVQADTEVPRN) is disordered.

It belongs to the glutamate-gated ion channel (TC 1.A.10.1) family. May form heteromers. Expressed predominantly in leaves and siliques. Also detected in roots.

The protein resides in the membrane. Functionally, glutamate-gated receptor that probably acts as a non-selective cation channel. May be involved in light-signal transduction and calcium homeostasis via the regulation of calcium influx into cells. In Arabidopsis thaliana (Mouse-ear cress), this protein is Glutamate receptor 3.7 (GLR3.7).